The chain runs to 295 residues: Light-independent protochlorophyllide reductase iron-sulfur ATP-binding protein (295 aa).

ATP-binding positions include 39-44 (GIGKST) and Lys-68. Residue Ser-43 participates in Mg(2+) binding. [4Fe-4S] cluster contacts are provided by Cys-124 and Cys-158. An ATP-binding site is contributed by 209 to 210 (NR).

It belongs to the NifH/BchL/ChlL family. In terms of assembly, homodimer. Protochlorophyllide reductase is composed of three subunits; ChlL, ChlN and ChlB. [4Fe-4S] cluster serves as cofactor.

The enzyme catalyses chlorophyllide a + oxidized 2[4Fe-4S]-[ferredoxin] + 2 ADP + 2 phosphate = protochlorophyllide a + reduced 2[4Fe-4S]-[ferredoxin] + 2 ATP + 2 H2O. It functions in the pathway porphyrin-containing compound metabolism; chlorophyll biosynthesis (light-independent). Component of the dark-operative protochlorophyllide reductase (DPOR) that uses Mg-ATP and reduced ferredoxin to reduce ring D of protochlorophyllide (Pchlide) to form chlorophyllide a (Chlide). This reaction is light-independent. The L component serves as a unique electron donor to the NB-component of the complex, and binds Mg-ATP. The sequence is that of Light-independent protochlorophyllide reductase iron-sulfur ATP-binding protein from Prochlorococcus marinus (strain MIT 9215).